The primary structure comprises 242 residues: Derlin-1 (242 aa).

The Cytoplasmic portion of the chain corresponds to 1 to 20 (MSSPAEYYNSLPPISKAYGT). Residues 21-41 (LCFFATVLCQLQILNPPFLAL) form a helical membrane-spanning segment. The Lumenal segment spans residues 42 to 55 (YYPFVFKKFQIWRL). The chain crosses the membrane as a helical span at residues 56-76 (FTSFFFLGKFSINFGIRLLMI). At 77–94 (ARYGVQLEKGAFEKRTAD) the chain is on the cytoplasmic side. Residues 95–115 (FLWMMIFGAISLLALSAIPFL) form a helical membrane-spanning segment. Over 116 to 157 (DIYFLGVPMVSMLLYVWSREYPNSQISMYGLVQLRSFYLPWA) the chain is Lumenal. Residues 158–178 (MLGLDVIFGSEILPGLLGILV) form a helical membrane-spanning segment. At 179–242 (GHTYYFLSVL…FRGRSYRLSQ (64 aa)) the chain is on the cytoplasmic side.

The protein belongs to the derlin family. Seedling shoots and roots.

It localises to the endoplasmic reticulum membrane. May be involved in the degradation process of specific misfolded endoplasmic reticulum (ER) luminal proteins. The chain is Derlin-1 (DER1) from Oryza sativa subsp. japonica (Rice).